The primary structure comprises 321 residues: Capsid protein (321 aa).

The interval 1 to 43 is disordered; the sequence is MSGEQTEQISKDKAVAAEQARKEQIAEGKKAAESPEVERRKKN. A compositionally biased stretch (basic and acidic residues) spans 9 to 39; that stretch reads ISKDKAVAAEQARKEQIAEGKKAAESPEVER.

It belongs to the potexviruses coat protein family.

It localises to the virion. In terms of biological role, required for genome encapsidation. Forms ribonucleoprotein complexes along with TGB1 helicase and viral RNA. The sequence is that of Capsid protein from Poplar mosaic virus (isolate ATCC Pv275) (PMV).